The primary structure comprises 106 residues: Pyrimidine/purine nucleoside phosphorylase (106 aa).

This sequence belongs to the nucleoside phosphorylase PpnP family.

The catalysed reaction is a purine D-ribonucleoside + phosphate = a purine nucleobase + alpha-D-ribose 1-phosphate. It carries out the reaction adenosine + phosphate = alpha-D-ribose 1-phosphate + adenine. It catalyses the reaction cytidine + phosphate = cytosine + alpha-D-ribose 1-phosphate. The enzyme catalyses guanosine + phosphate = alpha-D-ribose 1-phosphate + guanine. The catalysed reaction is inosine + phosphate = alpha-D-ribose 1-phosphate + hypoxanthine. It carries out the reaction thymidine + phosphate = 2-deoxy-alpha-D-ribose 1-phosphate + thymine. It catalyses the reaction uridine + phosphate = alpha-D-ribose 1-phosphate + uracil. The enzyme catalyses xanthosine + phosphate = alpha-D-ribose 1-phosphate + xanthine. Functionally, catalyzes the phosphorolysis of diverse nucleosides, yielding D-ribose 1-phosphate and the respective free bases. Can use uridine, adenosine, guanosine, cytidine, thymidine, inosine and xanthosine as substrates. Also catalyzes the reverse reactions. The sequence is that of Pyrimidine/purine nucleoside phosphorylase from Burkholderia multivorans (strain ATCC 17616 / 249).